A 317-amino-acid polypeptide reads, in one-letter code: Acetyl-coenzyme A carboxylase carboxyl transferase subunit alpha (317 aa).

In terms of domain architecture, CoA carboxyltransferase C-terminal spans 40–293; it reads LEKRSADALK…GDIIAASLRS (254 aa).

It belongs to the AccA family. Acetyl-CoA carboxylase is a heterohexamer composed of biotin carboxyl carrier protein (AccB), biotin carboxylase (AccC) and two subunits each of ACCase subunit alpha (AccA) and ACCase subunit beta (AccD).

It localises to the cytoplasm. The catalysed reaction is N(6)-carboxybiotinyl-L-lysyl-[protein] + acetyl-CoA = N(6)-biotinyl-L-lysyl-[protein] + malonyl-CoA. Its pathway is lipid metabolism; malonyl-CoA biosynthesis; malonyl-CoA from acetyl-CoA: step 1/1. Component of the acetyl coenzyme A carboxylase (ACC) complex. First, biotin carboxylase catalyzes the carboxylation of biotin on its carrier protein (BCCP) and then the CO(2) group is transferred by the carboxyltransferase to acetyl-CoA to form malonyl-CoA. This chain is Acetyl-coenzyme A carboxylase carboxyl transferase subunit alpha, found in Brucella canis (strain ATCC 23365 / NCTC 10854 / RM-666).